The primary structure comprises 194 residues: Serine/threonine-protein kinase mos (194 aa).

Positions 47–194 (LCLLHLLGSG…HLDLKPANIF (148 aa)) constitute a Protein kinase domain. ATP-binding positions include 53-61 (LGSGGFGSV) and Lys74. The Proton acceptor role is filled by Asp187.

The protein belongs to the protein kinase superfamily. Ser/Thr protein kinase family.

The enzyme catalyses L-seryl-[protein] + ATP = O-phospho-L-seryl-[protein] + ADP + H(+). The catalysed reaction is L-threonyl-[protein] + ATP = O-phospho-L-threonyl-[protein] + ADP + H(+). The sequence is that of Serine/threonine-protein kinase mos (MOS) from Atheris squamigera (Variable bush viper).